Here is a 76-residue protein sequence, read N- to C-terminus: Exodeoxyribonuclease 7 small subunit (76 aa).

The protein belongs to the XseB family. In terms of assembly, heterooligomer composed of large and small subunits.

Its subcellular location is the cytoplasm. The enzyme catalyses Exonucleolytic cleavage in either 5'- to 3'- or 3'- to 5'-direction to yield nucleoside 5'-phosphates.. Its function is as follows. Bidirectionally degrades single-stranded DNA into large acid-insoluble oligonucleotides, which are then degraded further into small acid-soluble oligonucleotides. In Enterococcus faecalis (strain ATCC 700802 / V583), this protein is Exodeoxyribonuclease 7 small subunit.